A 278-amino-acid chain; its full sequence is Large ribosomal subunit protein uL2 (278 aa).

Residues 226–278 (MNPIDHPHGGGEGKTAAGRHPVSPWGTPSKGSRTRKNKRTSNMIVRSRYSKKG) are disordered.

This sequence belongs to the universal ribosomal protein uL2 family. Part of the 50S ribosomal subunit. Forms a bridge to the 30S subunit in the 70S ribosome.

One of the primary rRNA binding proteins. Required for association of the 30S and 50S subunits to form the 70S ribosome, for tRNA binding and peptide bond formation. It has been suggested to have peptidyltransferase activity; this is somewhat controversial. Makes several contacts with the 16S rRNA in the 70S ribosome. This is Large ribosomal subunit protein uL2 from Nitrosomonas europaea (strain ATCC 19718 / CIP 103999 / KCTC 2705 / NBRC 14298).